A 541-amino-acid polypeptide reads, in one-letter code: ATP synthase subunit beta (541 aa).

Positions 1–65 (MAKAVTSSKG…TPVKKEERAK (65 aa)) are disordered. 2 stretches are compositionally biased toward basic and acidic residues: residues 25–36 (VKKDASKSKDAS) and 52–65 (AAKD…ERAK). 214–221 (GGAGVGKT) provides a ligand contact to ATP.

This sequence belongs to the ATPase alpha/beta chains family. F-type ATPases have 2 components, CF(1) - the catalytic core - and CF(0) - the membrane proton channel. CF(1) has five subunits: alpha(3), beta(3), gamma(1), delta(1), epsilon(1). CF(0) has three main subunits: a(1), b(2) and c(9-12). The alpha and beta chains form an alternating ring which encloses part of the gamma chain. CF(1) is attached to CF(0) by a central stalk formed by the gamma and epsilon chains, while a peripheral stalk is formed by the delta and b chains.

It localises to the cell inner membrane. It catalyses the reaction ATP + H2O + 4 H(+)(in) = ADP + phosphate + 5 H(+)(out). Functionally, produces ATP from ADP in the presence of a proton gradient across the membrane. The catalytic sites are hosted primarily by the beta subunits. The sequence is that of ATP synthase subunit beta from Bartonella tribocorum (strain CIP 105476 / IBS 506).